The following is a 662-amino-acid chain: MAPKRKQPYTEEGIDFKFTQFQIVPPINQKNFYTEYLKRDDQMYIWRDSAGEKDAKETESESANGDTKQDDSKKSQVEEEEDGIEESELGEEKDNKTIVLHIGSQNLRIGLASNKTPTTVPMVIARKMRAPFAQERCLLKDICHVNEDGNVAFDSEFDSNLKLLDSELKSWLKAQKKRSVPNGTQLVKNYNKISKPETVPPDDDPEKPDWIHFEQDDHVDVICGKEAFLLPLNEYPEYKLFYPIKSGVFNESDYASSQQLLADIYEIFKYSITSLLQIPVSQLSQYSVIFIVPDLYDRVYVEKILDILFFDLHFGKAAIVQESLCTSFGAGMSAACVVDMGAQKTSISCVEEGVVVPNSRIKINYGGDDITLLFMKLLMRSHFPYQDIDLKTPYDWSLANALKIKYCGLSEATYNVQLNSFFSRTPDKGTRKFTFKSLDETMLAPLGFFRPDIFENENKLHDRYTLFPVPVDVYDNQPNNPESLAQTTLLQISTPISNIKANGKDDEEKKEESDLVTPSVKFKPPRVVYCGSLAAPEIKNEKLIYPLDDAINQSIFSACDGNLSDEKAKNLYSSILIVGGAGQFPGFAHLLEERIHSKRANIPTISVIPPPRSMDAQFVAWKGACIYNRIRIVSELWIKNSDWKMLGSRVLQYKTLGYFWTG.

Composition is skewed to basic and acidic residues over residues 50-59 (AGEKDAKETE) and 67-77 (TKQDDSKKSQV). A disordered region spans residues 50–92 (AGEKDAKETESESANGDTKQDDSKKSQVEEEEDGIEESELGEE). A compositionally biased stretch (acidic residues) spans 78 to 89 (EEEEDGIEESEL). 339–342 (DMGA) contributes to the ATP binding site.

Belongs to the actin family. Component of the chromatin remodeling Ino80 complex. Exists as monomers and dimers, but the dimer is most probably the biologically relevant form required for stable interactions with histones that exploits the twofold symmetry of the nucleosome core.

The protein resides in the nucleus. Functionally, probably involved in transcription regulation via its interaction with the INO80 complex, a chromatin remodeling complex. Exhibits low basal ATPase activity, and unable to polymerize. Strongly prefer nucleosomes and H3-H4 tetramers over H2A-H2B dimers, suggesting it may act as a nucleosome recognition module within the complex. The polypeptide is Probable actin-related protein 8 (Schizosaccharomyces pombe (strain 972 / ATCC 24843) (Fission yeast)).